Reading from the N-terminus, the 856-residue chain is Facilitated trehalose transporter Tret1 (856 aa).

Disordered stretches follow at residues 1–27 (MSGR…GKLK) and 62–202 (DPFL…KATS). The Cytoplasmic segment spans residues 1–389 (MSGRDNRGAG…LEVYRPTTNP (389 aa)). Polar residues predominate over residues 69–80 (VSPQRHPQTVRT). Positions 133–142 (EIREHRDRQQ) are enriched in basic and acidic residues. The span at 170-180 (GNSNTNNNKAA) shows a compositional bias: polar residues. Phosphoserine is present on residues serine 247, serine 248, serine 249, serine 319, and serine 321. Residues 326-345 (LTSRQHFQQQRSISTDSRKS) are disordered. Residues 329-340 (RQHFQQQRSIST) show a composition bias toward polar residues. Residues 390–410 (IFIWTQVLAALSVSLGSLVVG) traverse the membrane as a helical segment. Topologically, residues 411–439 (FVSAYTSPALVSMTDRNITSFEVTQDAGS) are extracellular. N-linked (GlcNAc...) asparagine glycosylation is present at asparagine 427. Residues 440-460 (WVGGIMPLAGLAGGIAGGPLI) traverse the membrane as a helical segment. Residues 461–472 (EYLGRRNTILAT) lie on the Cytoplasmic side of the membrane. The helical transmembrane segment at 473–493 (AVPFIVSSLLIACAVNVAMVL) threads the bilayer. The Extracellular portion of the chain corresponds to 494 to 496 (CGR). A helical membrane pass occupies residues 497–517 (FLAGFCVGIASLSLPVYLGET). Residues 518-527 (VQPEVRGTLG) lie on the Cytoplasmic side of the membrane. Residues 528-548 (LLPTAFGNIGILLCFVAGSFM) form a helical membrane-spanning segment. Asparagine 549 is a glycosylation site (N-linked (GlcNAc...) asparagine). Residues 549–551 (NWS) are Extracellular-facing. A helical membrane pass occupies residues 552-572 (MLAFLGAALPVPFLILMFLIP). At 573–635 (ETPRWFVSRG…ELLKRNNLKP (63 aa)) the chain is on the cytoplasmic side. The chain crosses the membrane as a helical span at residues 636-656 (LSISLGLMFFQQLSGINAVIF). Topologically, residues 657–672 (YTVQIFKDAGSTIDGN) are extracellular. A helical membrane pass occupies residues 673–693 (ICTIIVGVVNFLATFIGIVLI). The Cytoplasmic portion of the chain corresponds to 694–699 (DRAGRK). Residues 700 to 720 (ILLYVSNIAMILTLFVLGGFF) traverse the membrane as a helical segment. Residues 721–739 (YCKAHGPDVSNLGWLPLTC) lie on the Extracellular side of the membrane. The chain crosses the membrane as a helical span at residues 740-760 (FVIYILGFSLGFGPIPWLMMG). Residues 761 to 766 (EILPAK) lie on the Cytoplasmic side of the membrane. Residues 767–787 (IRGSAASVATAFNWSCTFVVT) form a helical membrane-spanning segment. At 788-800 (KTFQDLTVAMGAH) the chain is on the extracellular side. A helical transmembrane segment spans residues 801 to 821 (GAFWLFGAICFVGLFFVIIYV). The Cytoplasmic portion of the chain corresponds to 822-856 (PETQGKTLEDIERKMMGRVRRMSSVANIKPLSFNM). Phosphoserine occurs at positions 844 and 845.

This sequence belongs to the major facilitator superfamily. Sugar transporter (TC 2.A.1.1) family. Trehalose transporter subfamily.

The protein resides in the cell membrane. In terms of biological role, low-capacity facilitative transporter for trehalose. Does not transport maltose, sucrose or lactose. Mediates the bidirectional transfer of trehalose. Responsible for the transport of trehalose synthesized in the fat body and the incorporation of trehalose into other tissues that require a carbon source, thereby regulating trehalose levels in the hemolymph. In Drosophila erecta (Fruit fly), this protein is Facilitated trehalose transporter Tret1.